The primary structure comprises 329 residues: Ribosomal RNA small subunit methyltransferase H (329 aa).

S-adenosyl-L-methionine contacts are provided by residues 34 to 36 (GGH), Asp-59, Phe-86, Asp-112, and Gln-119.

It belongs to the methyltransferase superfamily. RsmH family.

The protein resides in the cytoplasm. It catalyses the reaction cytidine(1402) in 16S rRNA + S-adenosyl-L-methionine = N(4)-methylcytidine(1402) in 16S rRNA + S-adenosyl-L-homocysteine + H(+). Specifically methylates the N4 position of cytidine in position 1402 (C1402) of 16S rRNA. The protein is Ribosomal RNA small subunit methyltransferase H of Chlorobium phaeobacteroides (strain DSM 266 / SMG 266 / 2430).